The following is a 470-amino-acid chain: Nuclear receptor subfamily 0 group B member 1 (470 aa).

3 repeat units span residues 1-67 (MAGE…YRCC), 68-133 (FCGK…YRCC), and 134-200 (FCGE…YRCC). The tract at residues 1-253 (MAGENHQWQG…RPVALKSPQV (253 aa)) is 4 X 67 AA tandem repeats. 3 short sequence motifs (LXXLL motif) span residues 13-17 (LYNML), 80-84 (LYSML), and 146-150 (LYSLL). A 4; truncated repeat occupies 201-253 (FCGEDHPQQGSTLYCVPTSTNQAQAAPEERPRAPWWDTSSGALRPVALKSPQV). The 265-residue stretch at 205–469 (DHPQQGSTLY…DMMLEMLCTK (265 aa)) folds into the NR LBD domain. Residues 461–466 (MMLEML) carry the AF-2 motif motif.

It belongs to the nuclear hormone receptor family. NR0 subfamily. Homodimer. Interacts with NR5A1, NR5A2, NR0B2 and with COPS2. Interacts with ESRRB; represses ESRRB activity at the GATA6 promoter.

The protein localises to the nucleus. It is found in the cytoplasm. In terms of biological role, nuclear receptor that lacks a DNA-binding domain and acts as a corepressor that inhibits the transcriptional activity of other nuclear receptors through heterodimeric interactions. Component of a cascade required for the development of the hypothalamic-pituitary-adrenal-gonadal axis. May also have a role in the development of the embryo and in the maintenance of embryonic stem cell pluripotency. The protein is Nuclear receptor subfamily 0 group B member 1 (NR0B1) of Homo sapiens (Human).